The following is a 441-amino-acid chain: Coiled-coil domain-containing protein 91 (441 aa).

The GGA1-binding motif stretch occupies residues 1-16; the sequence is MDDDDFGGFEAAETFD. Residues 1 to 26 form a disordered region; sequence MDDDDFGGFEAAETFDGGSGETQTTS. Phosphoserine is present on residues Ser-43 and Ser-46. Coiled-coil stretches lie at residues 130-209 and 249-407; these read SNIQ…GHEA and ELLN…KRLD. Positions 210 to 413 are homodimerization; the sequence is LSIIVDEYKA…KRLDQVIRQR (204 aa).

In terms of assembly, homodimer. Interacts with GGA1, GGA2 and AP1G1. In terms of tissue distribution, widely expressed.

It is found in the membrane. It localises to the golgi apparatus. Its subcellular location is the trans-Golgi network membrane. The protein localises to the trans-Golgi network. Functionally, involved in the regulation of membrane traffic through the trans-Golgi network (TGN). Functions in close cooperation with the GGAs in the sorting of hydrolases to lysosomes. This chain is Coiled-coil domain-containing protein 91 (CCDC91), found in Homo sapiens (Human).